The chain runs to 318 residues: Methionyl-tRNA formyltransferase (318 aa).

A (6S)-5,6,7,8-tetrahydrofolate-binding site is contributed by 112–115 (SILP).

Belongs to the Fmt family.

It catalyses the reaction L-methionyl-tRNA(fMet) + (6R)-10-formyltetrahydrofolate = N-formyl-L-methionyl-tRNA(fMet) + (6S)-5,6,7,8-tetrahydrofolate + H(+). Functionally, attaches a formyl group to the free amino group of methionyl-tRNA(fMet). The formyl group appears to play a dual role in the initiator identity of N-formylmethionyl-tRNA by promoting its recognition by IF2 and preventing the misappropriation of this tRNA by the elongation apparatus. The polypeptide is Methionyl-tRNA formyltransferase (Shewanella baltica (strain OS155 / ATCC BAA-1091)).